A 228-amino-acid chain; its full sequence is NAD(P)H-hydrate epimerase (228 aa).

One can recognise a YjeF N-terminal domain in the interval A9 to E214. N60 to D64 serves as a coordination point for (6S)-NADPHX. K(+)-binding residues include N61 and D125. Residues G129–E135 and D158 each bind (6S)-NADPHX. S161 is a binding site for K(+).

This sequence belongs to the NnrE/AIBP family. K(+) serves as cofactor.

The enzyme catalyses (6R)-NADHX = (6S)-NADHX. The catalysed reaction is (6R)-NADPHX = (6S)-NADPHX. In terms of biological role, catalyzes the epimerization of the S- and R-forms of NAD(P)HX, a damaged form of NAD(P)H that is a result of enzymatic or heat-dependent hydration. This is a prerequisite for the S-specific NAD(P)H-hydrate dehydratase to allow the repair of both epimers of NAD(P)HX. The protein is NAD(P)H-hydrate epimerase of Nematostella vectensis (Starlet sea anemone).